We begin with the raw amino-acid sequence, 374 residues long: Anhydro-N-acetylmuramic acid kinase (374 aa).

9-16 (GTSLDGID) is an ATP binding site.

The protein belongs to the anhydro-N-acetylmuramic acid kinase family.

The enzyme catalyses 1,6-anhydro-N-acetyl-beta-muramate + ATP + H2O = N-acetyl-D-muramate 6-phosphate + ADP + H(+). Its pathway is amino-sugar metabolism; 1,6-anhydro-N-acetylmuramate degradation. It functions in the pathway cell wall biogenesis; peptidoglycan recycling. Its function is as follows. Catalyzes the specific phosphorylation of 1,6-anhydro-N-acetylmuramic acid (anhMurNAc) with the simultaneous cleavage of the 1,6-anhydro ring, generating MurNAc-6-P. Is required for the utilization of anhMurNAc either imported from the medium or derived from its own cell wall murein, and thus plays a role in cell wall recycling. This chain is Anhydro-N-acetylmuramic acid kinase, found in Methylobacterium nodulans (strain LMG 21967 / CNCM I-2342 / ORS 2060).